The primary structure comprises 403 residues: MTMHQDHGVMKDLVKHPNEFPYLLQLAATTYGSPAAPIPKEPDRAFCYNTLHTVSKGFPRFVMRLPQELQDPICIFYLLLRALDTVEDDMNLKSETKISLLRVFHEHCSDRNWSMKSDYGIYADLMERFPLVVSVLEKLPPATQQTFRENVKYMGNGMADFIDKQILTVDEYDLYCHYVAGSCGIAVTKVIVQFNLATPEADSYDFSNSLGLLLQKANIITDYNEDINEEPRPRMFWPQEIWGKYAEKLADFNEPENIDTAVKCLNHMVTDAMRHIEPSLKGMVYFTDKTVFRALALLLVTAFGHLSTLYNNPNVFKEKVRQRKGRIARLVMSSRNVPGLFRTCLKLANNFESRCKQETANDPTVAMTIKRLQSIQATCRDGLAKYDTPSGLKSFCAAPTPTK.

Positions 84, 87, and 88 each coordinate Mg(2+).

It belongs to the phytoene/squalene synthase family. Requires Mg(2+) as cofactor.

It catalyses the reaction 2 (2E,6E)-farnesyl diphosphate = presqualene diphosphate + diphosphate. In terms of biological role, catalyzes the biosynthesis of presqualene diphosphate (PSPP). Works in combination with SSL-2 or SSL-3 to produce respectively squalene or botryococcene. In most other species, farnesyl diphosphate (FPP) is converted into squalene in a two-step reaction by a single enzyme. This is Presqualene diphosphate synthase (SSL-1) from Botryococcus braunii (Green alga).